A 296-amino-acid chain; its full sequence is Probable endonuclease 4 (296 aa).

Zn(2+)-binding residues include His68, His109, Glu144, Asp178, His181, His213, Asp226, His228, and Glu258.

The protein belongs to the AP endonuclease 2 family. It depends on Zn(2+) as a cofactor.

It catalyses the reaction Endonucleolytic cleavage to 5'-phosphooligonucleotide end-products.. Its function is as follows. Endonuclease IV plays a role in DNA repair. It cleaves phosphodiester bonds at apurinic or apyrimidinic (AP) sites, generating a 3'-hydroxyl group and a 5'-terminal sugar phosphate. This is Probable endonuclease 4 from Pediococcus pentosaceus (strain ATCC 25745 / CCUG 21536 / LMG 10740 / 183-1w).